Consider the following 150-residue polypeptide: Cytochrome c-type biogenesis protein CcmE (150 aa).

The Cytoplasmic portion of the chain corresponds to 1 to 7 (MTRKQKR). A helical; Signal-anchor for type II membrane protein transmembrane segment spans residues 8-28 (LAIIGGGVAFLTAAVLLVMFA). Residues 29-150 (FSQAVAYFYV…VTLGGEENIR (122 aa)) are Periplasmic-facing. Heme contacts are provided by H123 and Y127.

The protein belongs to the CcmE/CycJ family.

It localises to the cell inner membrane. Functionally, heme chaperone required for the biogenesis of c-type cytochromes. Transiently binds heme delivered by CcmC and transfers the heme to apo-cytochromes in a process facilitated by CcmF and CcmH. The chain is Cytochrome c-type biogenesis protein CcmE from Rhizobium meliloti (strain 1021) (Ensifer meliloti).